The chain runs to 33 residues: Brevinin-2HSa (33 aa).

Residues Cys27 and Cys33 are joined by a disulfide bond.

As to expression, expressed by the skin glands.

Its subcellular location is the secreted. Has antibacterial activity against the Gram-positive bacterium S.aureus ATCC 25923 (MIC=18 uM) and the Gram-negative bacterium E.coli ATCC 25726 (MIC=36 uM). The chain is Brevinin-2HSa from Odorrana hosii (Hose's rock frog).